The sequence spans 354 residues: Rhodopsin (354 aa).

Residues 1–36 (MNGTEGPMFYVPMSNATGVVKSPYDYPQYYLVAPWA) are Extracellular-facing. Residues Asn2 and Asn15 are each glycosylated (N-linked (GlcNAc...) asparagine). Residues 37–61 (YGCLAAYMFFLIITGFPINFLTLYV) form a helical membrane-spanning segment. Topologically, residues 62–73 (TIEHKKLRTPLN) are cytoplasmic. Residues 74 to 96 (YILLNLAISDLFMVFGGFTTTMY) traverse the membrane as a helical segment. Over 97 to 110 (TSLHGYFVFGRIGC) the chain is Extracellular. A disulfide bond links Cys110 and Cys187. Residues 111-133 (NLEGFFATLGGEMGLWSLVVLAF) form a helical membrane-spanning segment. The short motif at 134–136 (ERW) is the 'Ionic lock' involved in activated form stabilization element. The Cytoplasmic segment spans residues 134 to 152 (ERWMVVCKPVSNFRFGENH). Residues 153–173 (AIMGVVFTWFMACTCAVPPLV) form a helical membrane-spanning segment. Over 174–202 (GWSRYIPEGMQCSCGVDYYTRAPGYNNES) the chain is Extracellular. The chain crosses the membrane as a helical span at residues 203–224 (FVIYMFLVHFIIPLIVIFFCYG). Over 225-252 (RLVCTVKDAAAQQQESETTQRAEREVTR) the chain is Cytoplasmic. A helical transmembrane segment spans residues 253–274 (MVVIMVIGFLICWIPYASVAWY). At 275 to 286 (IFTHQGSEFGPV) the chain is on the extracellular side. A helical membrane pass occupies residues 287–308 (FMTVPAFFAKSAAVYNPCIYIC). Lys296 is subject to N6-(retinylidene)lysine. The Cytoplasmic portion of the chain corresponds to 309 to 354 (MNKQFRHCMITTLCCGKNPFEEEEGASTTASKTEASSVSSSSVSPA). S-palmitoyl cysteine attachment occurs at residues Cys322 and Cys323. The disordered stretch occupies residues 333 to 354 (GASTTASKTEASSVSSSSVSPA). A compositionally biased stretch (low complexity) spans 334–354 (ASTTASKTEASSVSSSSVSPA).

This sequence belongs to the G-protein coupled receptor 1 family. Opsin subfamily. Phosphorylated on some or all of the serine and threonine residues present in the C-terminal region. In terms of processing, contains one covalently linked retinal chromophore.

It is found in the membrane. It localises to the cell projection. The protein resides in the cilium. The protein localises to the photoreceptor outer segment. Functionally, photoreceptor required for image-forming vision at low light intensity. While most salt water fish species use retinal as chromophore, most freshwater fish use 3-dehydroretinal, or a mixture of retinal and 3-dehydroretinal. Light-induced isomerization of 11-cis to all-trans retinal triggers a conformational change that activates signaling via G-proteins. Subsequent receptor phosphorylation mediates displacement of the bound G-protein alpha subunit by arrestin and terminates signaling. The polypeptide is Rhodopsin (rho) (Cyprinus carpio (Common carp)).